Consider the following 408-residue polypeptide: Peptidase T (408 aa).

Zn(2+) is bound at residue histidine 78. Residue aspartate 80 is part of the active site. Zn(2+) is bound at residue aspartate 140. The active-site Proton acceptor is glutamate 173. Residues glutamate 174, aspartate 196, and histidine 379 each contribute to the Zn(2+) site.

The protein belongs to the peptidase M20B family. Requires Zn(2+) as cofactor.

Its subcellular location is the cytoplasm. It carries out the reaction Release of the N-terminal residue from a tripeptide.. Cleaves the N-terminal amino acid of tripeptides. The chain is Peptidase T from Shigella flexneri serotype 5b (strain 8401).